Reading from the N-terminus, the 291-residue chain is 4-hydroxy-tetrahydrodipicolinate synthase (291 aa).

Residue Thr44 coordinates pyruvate. The Proton donor/acceptor role is filled by Tyr132. Lys160 serves as the catalytic Schiff-base intermediate with substrate. Residue Val202 coordinates pyruvate.

Belongs to the DapA family. Homotetramer; dimer of dimers.

The protein resides in the cytoplasm. The catalysed reaction is L-aspartate 4-semialdehyde + pyruvate = (2S,4S)-4-hydroxy-2,3,4,5-tetrahydrodipicolinate + H2O + H(+). It functions in the pathway amino-acid biosynthesis; L-lysine biosynthesis via DAP pathway; (S)-tetrahydrodipicolinate from L-aspartate: step 3/4. Catalyzes the condensation of (S)-aspartate-beta-semialdehyde [(S)-ASA] and pyruvate to 4-hydroxy-tetrahydrodipicolinate (HTPA). This chain is 4-hydroxy-tetrahydrodipicolinate synthase, found in Clostridium perfringens (strain SM101 / Type A).